The primary structure comprises 430 residues: Protein translocase subunit SecY (430 aa).

10 consecutive transmembrane segments (helical) span residues 18–38 (IFFTLAMLVIFKIGTYIPAPG), 68–88 (FSIFAMGIMPYITASIVMQLL), 117–137 (FAIILAFIQSIGMAFQFNNYL), 147–167 (VMSYLLIAVVLTAGTAFLIWL), 174–194 (FGVGNGISLIIFAGILSTLPS), 217–237 (ILGLIVALILLTVGAIFVLEA), 270–290 (VIPVIFAMAFFLLPRTLTLFF), 308–328 (NIGMIIYVVLIIAFAYFYAFV), 368–388 (FVGSIFLAAIAILPIIATKFM), and 389–409 (GLPQSIQIGGTSLLIVIGVAI).

The protein belongs to the SecY/SEC61-alpha family. Component of the Sec protein translocase complex. Heterotrimer consisting of SecY, SecE and SecG subunits. The heterotrimers can form oligomers, although 1 heterotrimer is thought to be able to translocate proteins. Interacts with the ribosome. Interacts with SecDF, and other proteins may be involved. Interacts with SecA.

The protein localises to the cell membrane. Functionally, the central subunit of the protein translocation channel SecYEG. Consists of two halves formed by TMs 1-5 and 6-10. These two domains form a lateral gate at the front which open onto the bilayer between TMs 2 and 7, and are clamped together by SecE at the back. The channel is closed by both a pore ring composed of hydrophobic SecY resides and a short helix (helix 2A) on the extracellular side of the membrane which forms a plug. The plug probably moves laterally to allow the channel to open. The ring and the pore may move independently. In Staphylococcus epidermidis (strain ATCC 35984 / DSM 28319 / BCRC 17069 / CCUG 31568 / BM 3577 / RP62A), this protein is Protein translocase subunit SecY.